We begin with the raw amino-acid sequence, 178 residues long: Large ribosomal subunit protein uL6 (178 aa).

The protein belongs to the universal ribosomal protein uL6 family. In terms of assembly, part of the 50S ribosomal subunit.

This protein binds to the 23S rRNA, and is important in its secondary structure. It is located near the subunit interface in the base of the L7/L12 stalk, and near the tRNA binding site of the peptidyltransferase center. The chain is Large ribosomal subunit protein uL6 from Aliarcobacter butzleri (strain RM4018) (Arcobacter butzleri).